We begin with the raw amino-acid sequence, 421 residues long: ATP-dependent RNA helicase RhlB (421 aa).

The Q motif motif lies at 9–37 (QKFSDFALHPKVVEALEKKGFHNCTPIQA). Residues 40-219 (LPLTLAGRDV…FEQMNNAEYI (180 aa)) form the Helicase ATP-binding domain. Residue 53–60 (AQTGTGKT) participates in ATP binding. A DEAD box motif is present at residues 165 to 168 (DEAD). Residues 245-390 (RLLQTLIEEE…VSKYNPDALM (146 aa)) form the Helicase C-terminal domain. The interval 392 to 421 (DLPKPLRLTRPRTGNGPRRTGTPRNRRRSG) is disordered. The span at 402–414 (PRTGNGPRRTGTP) shows a compositional bias: low complexity.

The protein belongs to the DEAD box helicase family. RhlB subfamily. Component of the RNA degradosome, which is a multiprotein complex involved in RNA processing and mRNA degradation.

It localises to the cytoplasm. The catalysed reaction is ATP + H2O = ADP + phosphate + H(+). Functionally, DEAD-box RNA helicase involved in RNA degradation. Has RNA-dependent ATPase activity and unwinds double-stranded RNA. This is ATP-dependent RNA helicase RhlB from Escherichia coli O17:K52:H18 (strain UMN026 / ExPEC).